A 371-amino-acid chain; its full sequence is MSKRDYYEVLGLSKGASKDEIKKAYRRLAKKYHPDVSKEENAIEKFKEVQEAYEVLSDDQKRAQYDQFGHAGANQGFGGFGGGGDFGGGFGFEDIFSSFFGGGGGRRRDPNAPRQGADLQYQVTLDFEEAIFGKELNVEIPVEDPCDTCKGSGAKPGTSKETCKHCSGSGQVSVEQNTPFGRIVNRQACGHCSGTGQIIKEKCTTCHGSGKVRKRKKINVKIPAGIDNGQQIRVSGKGEAGVNGGPAGDLYVVVHVRNHEFFEREGDHIICEMPLTFAQMALGDEVEVPTVHGKVKLKIPAGTQTGTEFRLKGKGAPNVRGYGQGDQYVVVRVVVPTKLTSQQKDLLREFAGQEEQDDSLFGKLKRAFKGE.

The J domain maps to 5-69 (DYYEVLGLSK…QKRAQYDQFG (65 aa)). Residues 133–215 (GKELNVEIPV…CHGSGKVRKR (83 aa)) form a CR-type zinc finger. Cysteine 146, cysteine 149, cysteine 163, cysteine 166, cysteine 189, cysteine 192, cysteine 203, and cysteine 206 together coordinate Zn(2+). 4 CXXCXGXG motif repeats span residues 146-153 (CDTCKGSG), 163-170 (CKHCSGSG), 189-196 (CGHCSGTG), and 203-210 (CTTCHGSG).

Belongs to the DnaJ family. Homodimer. Zn(2+) is required as a cofactor.

The protein localises to the cytoplasm. Participates actively in the response to hyperosmotic and heat shock by preventing the aggregation of stress-denatured proteins and by disaggregating proteins, also in an autonomous, DnaK-independent fashion. Unfolded proteins bind initially to DnaJ; upon interaction with the DnaJ-bound protein, DnaK hydrolyzes its bound ATP, resulting in the formation of a stable complex. GrpE releases ADP from DnaK; ATP binding to DnaK triggers the release of the substrate protein, thus completing the reaction cycle. Several rounds of ATP-dependent interactions between DnaJ, DnaK and GrpE are required for fully efficient folding. Also involved, together with DnaK and GrpE, in the DNA replication of plasmids through activation of initiation proteins. The sequence is that of Chaperone protein DnaJ from Bacillus cereus (strain ATCC 10987 / NRS 248).